Here is a 678-residue protein sequence, read N- to C-terminus: Geranylgeranyl transferase type-2 subunit alpha 1 (678 aa).

PFTA repeat units lie at residues 40-74 (YTNE…DRLA), 86-120 (ILDE…KGHS), 121-155 (SVGN…LTNR), 156-190 (SEQD…SLLA), and 201-235 (KIPE…QTLN). LRR repeat units lie at residues 510-532 (MNNL…VEKL), 533-554 (LFVQ…LEAM), 555-578 (QLLS…SLRH), 580-604 (KQLK…RYLC), and 638-663 (DLNL…VLQV).

It belongs to the protein prenyltransferase subunit alpha family. In terms of assembly, heterotrimer composed of the alpha subunit RGTA, the beta subunit RGTB and REP; within this trimer, RGTA and RGTB form the catalytic component, while REP mediates peptide substrate binding.

The catalysed reaction is geranylgeranyl diphosphate + L-cysteinyl-[protein] = S-geranylgeranyl-L-cysteinyl-[protein] + diphosphate. With respect to regulation, the enzymatic reaction requires the aid of the Rab escort protein REP. Functionally, catalyzes the transfer of a geranylgeranyl moiety from geranylgeranyl diphosphate to both cysteines of Rab proteins with the C-terminal sequence -CCXX, CXXX, -XCCX and -XCXC, such as RABA1A, RABA2A, RABF2A and RABG2. In vitro, can prenylate PGGTI targets with the C-terminal Cys-aliphatic-aliphatic-X (CaaX) with leucine in the terminal position. Substrates with the C-terminal sequence -CSIL such as ARAC11/ROP1 or GG2/AGG2 are prenylated independently of REP and when the alpha subunit is associated with a beta subunit (RGTB1 or RGTB2). The chain is Geranylgeranyl transferase type-2 subunit alpha 1 from Arabidopsis thaliana (Mouse-ear cress).